A 544-amino-acid chain; its full sequence is Protein angel homolog 2 (544 aa).

It belongs to the CCR4/nocturin family.

The chain is Protein angel homolog 2 (ANGEL2) from Homo sapiens (Human).